Here is a 102-residue protein sequence, read N- to C-terminus: Small ribosomal subunit protein uS10 (102 aa).

The protein belongs to the universal ribosomal protein uS10 family. As to quaternary structure, part of the 30S ribosomal subunit.

Involved in the binding of tRNA to the ribosomes. The sequence is that of Small ribosomal subunit protein uS10 from Saccharolobus islandicus (strain M.16.4 / Kamchatka #3) (Sulfolobus islandicus).